Consider the following 1485-residue polypeptide: Chromosome partition protein MukB (1485 aa).

34–41 (GGNGAGKS) contributes to the ATP binding site. 2 coiled-coil regions span residues 337 to 480 (LNLV…QAYQ) and 509 to 605 (QHLA…PVWL). Residues 666 to 783 (PSGAEDARLI…EVPLFGRAAR (118 aa)) form a flexible hinge region. 2 coiled-coil regions span residues 835–915 (EAEI…IQQH) and 977–1116 (GMLT…AKAG).

Belongs to the SMC family. MukB subfamily. In terms of assembly, homodimerization via its hinge domain. Binds to DNA via its C-terminal region. Interacts, and probably forms a ternary complex, with MukE and MukF via its C-terminal region. The complex formation is stimulated by calcium or magnesium. Interacts with tubulin-related protein FtsZ.

It localises to the cytoplasm. It is found in the nucleoid. Plays a central role in chromosome condensation, segregation and cell cycle progression. Functions as a homodimer, which is essential for chromosome partition. Involved in negative DNA supercoiling in vivo, and by this means organize and compact chromosomes. May achieve or facilitate chromosome segregation by condensation DNA from both sides of a centrally located replisome during cell division. The chain is Chromosome partition protein MukB from Yersinia pseudotuberculosis serotype IB (strain PB1/+).